Here is a 562-residue protein sequence, read N- to C-terminus: Tubby-related protein 2 (562 aa).

The tract at residues 1–81 (MDREGPRGPR…RRGEERFQSD (81 aa)) is disordered. Basic and acidic residues predominate over residues 35–46 (QKLEQQRQLFEK). Residues S152, S153, and S155 each carry the phosphoserine modification. The disordered stretch occupies residues 179–294 (LRRGWLASPG…SNHNAWNMTC (116 aa)). Phosphothreonine is present on T211. Residue S213 is modified to Phosphoserine. Over residues 225-240 (DGDHGDLAPCKVEENT) the composition is skewed to basic and acidic residues. Residues 285-294 (SNHNAWNMTC) show a composition bias toward polar residues.

Belongs to the TUB family. As to expression, expressed in retina and testis.

The protein resides in the cytoplasm. It is found in the secreted. This Mus musculus (Mouse) protein is Tubby-related protein 2 (Tulp2).